The primary structure comprises 347 residues: Heat-inducible transcription repressor HrcA (347 aa).

Belongs to the HrcA family.

Its function is as follows. Negative regulator of class I heat shock genes (grpE-dnaK-dnaJ and groELS operons). Prevents heat-shock induction of these operons. In Nocardia farcinica (strain IFM 10152), this protein is Heat-inducible transcription repressor HrcA.